A 1151-amino-acid polypeptide reads, in one-letter code: Phospholipid-transporting ATPase NEO1 (1151 aa).

Disordered regions lie at residues 1-21 (MPNP…NNNQ) and 73-95 (LDNF…THPL). Topologically, residues 1-184 (MPNPPSFKSH…LSNAKYNAVT (184 aa)) are extracellular. A compositionally biased stretch (polar residues) spans 12–21 (QNLFNSNNNQ). A required for endosome-to-Golgi sorting region spans residues 51-104 (EPLSKHNTVGDRESFEMRTVDDLDNFSNHSSDSHRKSSNTDTHPLMYDNRLSQD). Ser-102 is subject to Phosphoserine. The helical transmembrane segment at 185–205 (FVPTLLYEQFKFFYNLYFLVV) threads the bilayer. Residues 206–209 (ALSQ) are Cytoplasmic-facing. A helical membrane pass occupies residues 210 to 230 (AVPALRIGYLSSYIVPLAFVL). The Extracellular portion of the chain corresponds to 231 to 367 (TVTMAKEAID…TSNPLSVDNT (137 aa)). A helical transmembrane segment spans residues 368-388 (LWANTVLASSGFCIACVVYTG). At 389–416 (RDTRQAMNTTTAKVKTGLLELEINSISK) the chain is on the cytoplasmic side. The helical transmembrane segment at 417-437 (ILCACVFALSILLVAFAGFHN) threads the bilayer. Asp-438 is a topological domain (extracellular). Residues 439 to 459 (DWYIDILRYLILFSTIIPVSL) traverse the membrane as a helical segment. The Cytoplasmic segment spans residues 460–947 (RVNLDLAKSV…KLAQFVMHRG (488 aa)). The active-site 4-aspartylphosphate intermediate is Asp-503. ATP contacts are provided by Asp-503, Lys-504, and Thr-505. Asp-503 lines the Mg(2+) pocket. Thr-505 serves as a coordination point for Mg(2+). Phosphoserine is present on Ser-551. Residues Glu-597, Phe-640, Ser-642, Lys-645, Lys-664, Arg-693, Thr-694, Thr-774, Gly-775, Asp-776, Arg-856, and Lys-862 each coordinate ATP. Asp-882 is a Mg(2+) binding site. Positions 885 and 886 each coordinate ATP. A Mg(2+)-binding site is contributed by Asp-886. Residues 948-968 (LIIAICQAVYSICSLFEPIAL) traverse the membrane as a helical segment. Residues 969–970 (YQ) lie on the Extracellular side of the membrane. The chain crosses the membrane as a helical span at residues 971–991 (GWLMVGYATCYTMAPVFSLTL). At 992 to 1020 (DHDIEESLTKIYPELYKELTEGKSLSYKT) the chain is on the cytoplasmic side. A helical membrane pass occupies residues 1021–1041 (FFVWVLLSLFQGSVIQLFSQA). Topologically, residues 1042 to 1052 (FTSLLDTDFTR) are extracellular. The helical transmembrane segment at 1053-1073 (MVAISFTALVVNELIMVALEI) threads the bilayer. Over 1074–1078 (YTWNK) the chain is Cytoplasmic. Residues 1079–1099 (TMLVTEIATLLFYIVSVPFLG) traverse the membrane as a helical segment. Topologically, residues 1100 to 1109 (DYFDLGYMTT) are extracellular. Residues 1110–1130 (VNYYAGLLVILLISIFPVWTA) traverse the membrane as a helical segment. Residues 1131 to 1151 (KAIYRRLHPPSYAKVQEFATP) are Cytoplasmic-facing. The required for endosomal targeting stretch occupies residues 1131–1151 (KAIYRRLHPPSYAKVQEFATP).

This sequence belongs to the cation transport ATPase (P-type) (TC 3.A.3) family. Type IV subfamily. Interacts with MON2. Interacts with ANY1. Functions without a CDC50/LEM3 family accessory subunit. Mg(2+) serves as cofactor.

It localises to the endosome membrane. It is found in the golgi apparatus membrane. It catalyses the reaction ATP + H2O + phospholipidSide 1 = ADP + phosphate + phospholipidSide 2.. The catalysed reaction is a 1,2-diacyl-sn-glycero-3-phospho-L-serine(out) + ATP + H2O = a 1,2-diacyl-sn-glycero-3-phospho-L-serine(in) + ADP + phosphate + H(+). The enzyme catalyses a 1,2-diacyl-sn-glycero-3-phosphoethanolamine(out) + ATP + H2O = a 1,2-diacyl-sn-glycero-3-phosphoethanolamine(in) + ADP + phosphate + H(+). Flippase that catalyzes the hydrolysis of ATP coupled to the transport of lysophosphatidylserine, phosphatidylethanolamine, and phosphatidylserine from the lumenal to the cytosolic leaflet of the Golgi apparatus membrane and ensures the maintenance of asymmetric distribution of phospholipids. Does not appear to transport phosphatidylcholine or sphingomyelin. May be involved in recycling from endosomes by driving the formation of SNX3-dependent recycling tubules. Required for COPI retrograde transport from the Golgi to the endoplasmic reticulum, Golgi-endosome trafficking, and Golgi-dependent protein glycosylation. The protein is Phospholipid-transporting ATPase NEO1 of Saccharomyces cerevisiae (strain ATCC 204508 / S288c) (Baker's yeast).